A 141-amino-acid chain; its full sequence is Ly6/PLAUR domain-containing protein 1 (141 aa).

An N-terminal signal peptide occupies residues 1-20 (MWVLGIAATFCGLFWLPGLA). Cystine bridges form between Cys25/Cys54, Cys28/Cys37, Cys46/Cys71, Cys77/Cys100, Cys88/Cys97, and Cys101/Cys106. The region spanning 25–107 (CYQCEEFQLN…ISCCNTPLCN (83 aa)) is the UPAR/Ly6 domain. A glycan (N-linked (GlcNAc...) asparagine) is linked at Asn45. A lipid anchor (GPI-anchor amidated glycine) is attached at Gly115. Positions 116–141 (SSASAIRPGLLTTLLFFHLALCLAHC) are cleaved as a propeptide — removed in mature form.

As to quaternary structure, interacts with CHRNA4 and nAChRs containing alpha-4:beta-2 (CHRNA4:CHRNB2) and alpha-7 (CHRNA7) subunits. In terms of tissue distribution, preferentially expressed in the nervous system. Expressed in embryonic and postnatal postmitotic central and peripheral neurons including subpopulations of motor neurons, sensory neurons, interneurons and neurons of the autonomous nervous system. Expressed around the growing nerves in the limb bud. Expressed at high levels in specific brain regions such as the prefrontal cortex, amygdala, hippocampus, mediodorsal thalamus, dentate gyrus and specific brainstem nuclei (at protein level).

The protein localises to the cell membrane. Its function is as follows. Believed to act as a modulator of nicotinic acetylcholine receptors (nAChRs) activity. In vitro increases receptor desensitization and decreases affinity for ACh of alpha-4:beta-2-containing nAChRs. May play a role in the intracellular trafficking of alpha-4:beta-2 and alpha-7-containing nAChRs and may inhibit their expression at the cell surface. May be involved in the control of anxiety. This chain is Ly6/PLAUR domain-containing protein 1 (Lypd1), found in Mus musculus (Mouse).